Consider the following 409-residue polypeptide: Elongation factor Tu (409 aa).

The region spanning 10 to 214 (KPHLNIGTIG…AVDSFIPTPE (205 aa)) is the tr-type G domain. The interval 19-26 (GHVDHGKT) is G1. 19–26 (GHVDHGKT) serves as a coordination point for GTP. Residue Thr26 participates in Mg(2+) binding. The interval 60–64 (GITIN) is G2. The segment at 81-84 (DCPG) is G3. Residues 81–85 (DCPGH) and 136–139 (NKED) contribute to the GTP site. The G4 stretch occupies residues 136–139 (NKED). The tract at residues 174–176 (SGL) is G5.

It belongs to the TRAFAC class translation factor GTPase superfamily. Classic translation factor GTPase family. EF-Tu/EF-1A subfamily. As to quaternary structure, monomer.

The protein localises to the cytoplasm. It carries out the reaction GTP + H2O = GDP + phosphate + H(+). In terms of biological role, GTP hydrolase that promotes the GTP-dependent binding of aminoacyl-tRNA to the A-site of ribosomes during protein biosynthesis. This Nostoc punctiforme (strain ATCC 29133 / PCC 73102) protein is Elongation factor Tu.